A 353-amino-acid chain; its full sequence is MTDETKLTYADAGVDIDAGNAMVEAIKPLVRATRRRGADAEIGGFGGLFDLKAAGFTDPILVAANDGVGTKVRIAIETGAHDTIGIDLVAMCVNDLIVQGAEPLFFLDYYASGKLDGAAAAAVVKGIANGCIEAGAALIGGETAEMPGLYAGADYDLAGFAVGAVERGALLPRSDIAAGDVLLGLASSGAHSNGFSLIRKIVAAQKLGWDAPAPYAPGQSLGAALLTPTRIYVKTLLPLLRAQAGIKGLAHITGGGFPDNLPRVLPQGLGVEVDLSAIAVPPVFAWLAEAGHVSAAEMLRTFNCGVGMALICAEADAGALLASLRAAGEQPVALGRVTPAGAERVTYSGRLSL.

Belongs to the AIR synthase family.

It localises to the cytoplasm. The catalysed reaction is 2-formamido-N(1)-(5-O-phospho-beta-D-ribosyl)acetamidine + ATP = 5-amino-1-(5-phospho-beta-D-ribosyl)imidazole + ADP + phosphate + H(+). Its pathway is purine metabolism; IMP biosynthesis via de novo pathway; 5-amino-1-(5-phospho-D-ribosyl)imidazole from N(2)-formyl-N(1)-(5-phospho-D-ribosyl)glycinamide: step 2/2. In Methylocella silvestris (strain DSM 15510 / CIP 108128 / LMG 27833 / NCIMB 13906 / BL2), this protein is Phosphoribosylformylglycinamidine cyclo-ligase.